The chain runs to 414 residues: MKKLLAIGILCIMVTAVMSGCVSEKEININNSNKITTNMPVSEKNITKILKYAKNMNLIYYDENGNIVNPYNGDKWKYKVFIDATGQKFLLKNKDDPVPSWAKEKLGDNFKVINVPLTRVIVMSSTEIALMEAINDDGSVIGSVKGIMWGKSYKWYFKDINKSLAEGKIIDVGSSSNPNWDKIIEINPQVIFVYPGYDGDKIIAKCKELGITYVADAEYLENDPLGRCEWVKMFAAFYNKEPEAKRYFEKVEDNCLKVINKTKNCPKVTVAWGYNSQWGCYVPENNSYVAKEIMFYCNGDYIFKDLNGTGSAKINYETFAERAKDADVWVVPSSTAWLSTFKEDNPGYETFKAVKNGRVFCESDDYWQLGLLKTDEVIMDLATILHPEAFKGRKTHFFLKYNIENNTATPFIAK.

An N-terminal signal peptide occupies residues 1–20 (MKKLLAIGILCIMVTAVMSG). The S-archaeol cysteine moiety is linked to residue Cys21. A Fe/B12 periplasmic-binding domain is found at 119–389 (RVIVMSSTEI…DLATILHPEA (271 aa)).

Its subcellular location is the cell membrane. This is an uncharacterized protein from Methanocaldococcus jannaschii (strain ATCC 43067 / DSM 2661 / JAL-1 / JCM 10045 / NBRC 100440) (Methanococcus jannaschii).